The primary structure comprises 399 residues: Elongation factor Tu (399 aa).

One can recognise a tr-type G domain in the interval 10-209; sequence KPHVNIGTIG…EVDAYIPTPE (200 aa). The interval 19 to 26 is G1; that stretch reads GHVDHGKT. A GTP-binding site is contributed by 19–26; that stretch reads GHVDHGKT. T26 lines the Mg(2+) pocket. A G2 region spans residues 60–64; the sequence is GITIA. Residues 81-84 form a G3 region; it reads DCPG. Residues 81–85 and 136–139 each bind GTP; these read DCPGH and NKQD. The interval 136-139 is G4; the sequence is NKQD. The tract at residues 174–176 is G5; that stretch reads SAL.

It belongs to the TRAFAC class translation factor GTPase superfamily. Classic translation factor GTPase family. EF-Tu/EF-1A subfamily. Monomer.

The protein resides in the cytoplasm. It catalyses the reaction GTP + H2O = GDP + phosphate + H(+). GTP hydrolase that promotes the GTP-dependent binding of aminoacyl-tRNA to the A-site of ribosomes during protein biosynthesis. This Helicobacter pylori (strain ATCC 700392 / 26695) (Campylobacter pylori) protein is Elongation factor Tu.